A 473-amino-acid polypeptide reads, in one-letter code: MMTQVPDTPQALYRALPSMDSLLADAVLAPLLQRYGKAAVKAALDSQLRTARELIAQERRLPAWCANPSLLNGYLVDQLSKDYSHSLKPVWNLTGTILHTNLGRAQQSEAAIRAVTSVMRYPTPLEFELAAGERGHRDNAISGLIQRLTGAEACCVVNNNAAAVLLMLSAVAAGKEVIVSRGELVEIGGAFRIPDIMRQAGCTLVEVGSTNRTHLKDYEQAITENTAAIMKVHTSNYHISGFTAAVEEARLGQLCRERGILLISDLGSGSLTDLRRFGLKQEPTPQAMLADGVDLVSFSGDKLLGGPQSGLIVGKQALINKLQSHPLKRALRCDKLILAALEATLIHYLNPETLDKELPIMAKFARSQAELRQIGERLQQALAPLFTPSYGLELVECQTQVGSGSQPDTFLPSIGLCFNAQEGGSLTLLEQHFKQAQRPVIGRMTQDQLRLDLRGIDDEAELLAELSTLGVQL.

At Lys302 the chain carries N6-(pyridoxal phosphate)lysine.

This sequence belongs to the SelA family. Pyridoxal 5'-phosphate serves as cofactor.

Its subcellular location is the cytoplasm. The catalysed reaction is L-seryl-tRNA(Sec) + selenophosphate + H(+) = L-selenocysteinyl-tRNA(Sec) + phosphate. The protein operates within aminoacyl-tRNA biosynthesis; selenocysteinyl-tRNA(Sec) biosynthesis; selenocysteinyl-tRNA(Sec) from L-seryl-tRNA(Sec) (bacterial route): step 1/1. In terms of biological role, converts seryl-tRNA(Sec) to selenocysteinyl-tRNA(Sec) required for selenoprotein biosynthesis. This Shewanella oneidensis (strain ATCC 700550 / JCM 31522 / CIP 106686 / LMG 19005 / NCIMB 14063 / MR-1) protein is L-seryl-tRNA(Sec) selenium transferase.